The primary structure comprises 219 residues: Adenylate kinase (219 aa).

12 to 17 (GAGKGT) is a binding site for ATP. Residues 32-61 (STGDMLRAAVKAGTPIGLQAKAVMDAGELV) form an NMP region. Residues threonine 33, arginine 38, 59-61 (ELV), 87-90 (GYPR), and glutamine 94 each bind AMP. An LID region spans residues 128–165 (GRFSCARCGEGYHDRYKLPKVADICDVCGSKEFKRRPD). Arginine 129 contacts ATP. Zn(2+) contacts are provided by cysteine 132, cysteine 135, cysteine 152, and cysteine 155. AMP contacts are provided by arginine 162 and arginine 174. Position 202 (alanine 202) interacts with ATP.

The protein belongs to the adenylate kinase family. As to quaternary structure, monomer.

It is found in the cytoplasm. It carries out the reaction AMP + ATP = 2 ADP. The protein operates within purine metabolism; AMP biosynthesis via salvage pathway; AMP from ADP: step 1/1. Catalyzes the reversible transfer of the terminal phosphate group between ATP and AMP. Plays an important role in cellular energy homeostasis and in adenine nucleotide metabolism. The polypeptide is Adenylate kinase (Sphingopyxis alaskensis (strain DSM 13593 / LMG 18877 / RB2256) (Sphingomonas alaskensis)).